The following is a 453-amino-acid chain: Signal recognition particle protein (453 aa).

GTP contacts are provided by residues 107 to 114 (GLQGAGKT), 190 to 194 (DTAGR), and 248 to 251 (TKVD).

This sequence belongs to the GTP-binding SRP family. SRP54 subfamily. As to quaternary structure, part of the signal recognition particle protein translocation system, which is composed of SRP and FtsY. SRP is a ribonucleoprotein composed of Ffh and a 4.5S RNA molecule.

It is found in the cytoplasm. The catalysed reaction is GTP + H2O = GDP + phosphate + H(+). Functionally, involved in targeting and insertion of nascent membrane proteins into the cytoplasmic membrane. Binds to the hydrophobic signal sequence of the ribosome-nascent chain (RNC) as it emerges from the ribosomes. The SRP-RNC complex is then targeted to the cytoplasmic membrane where it interacts with the SRP receptor FtsY. Interaction with FtsY leads to the transfer of the RNC complex to the Sec translocase for insertion into the membrane, the hydrolysis of GTP by both Ffh and FtsY, and the dissociation of the SRP-FtsY complex into the individual components. This is Signal recognition particle protein from Escherichia coli O157:H7.